A 122-amino-acid polypeptide reads, in one-letter code: Large ribosomal subunit protein uL14 (122 aa).

Belongs to the universal ribosomal protein uL14 family. In terms of assembly, part of the 50S ribosomal subunit. Forms a cluster with proteins L3 and L19. In the 70S ribosome, L14 and L19 interact and together make contacts with the 16S rRNA in bridges B5 and B8.

Binds to 23S rRNA. Forms part of two intersubunit bridges in the 70S ribosome. This is Large ribosomal subunit protein uL14 from Mycobacterium leprae (strain TN).